Here is a 336-residue protein sequence, read N- to C-terminus: Dihydroorotate dehydrogenase (quinone) (336 aa).

FMN is bound by residues Ala-62 to Lys-66 and Thr-86. Position 66 (Lys-66) interacts with substrate. Asn-111 to Phe-115 is a substrate binding site. The FMN site is built by Asn-139 and Asn-172. Asn-172 is a binding site for substrate. Catalysis depends on Ser-175, which acts as the Nucleophile. Substrate is bound at residue Asn-177. The FMN site is built by Lys-217 and Thr-245. Residue Asn-246–Thr-247 participates in substrate binding. FMN contacts are provided by residues Gly-268, Gly-297, and Tyr-318 to Ser-319.

It belongs to the dihydroorotate dehydrogenase family. Type 2 subfamily. As to quaternary structure, monomer. FMN serves as cofactor.

The protein localises to the cell membrane. The catalysed reaction is (S)-dihydroorotate + a quinone = orotate + a quinol. The protein operates within pyrimidine metabolism; UMP biosynthesis via de novo pathway; orotate from (S)-dihydroorotate (quinone route): step 1/1. In terms of biological role, catalyzes the conversion of dihydroorotate to orotate with quinone as electron acceptor. The polypeptide is Dihydroorotate dehydrogenase (quinone) (Serratia proteamaculans (strain 568)).